Reading from the N-terminus, the 488-residue chain is UDP-N-acetylmuramate--L-alanine ligase (488 aa).

ATP is bound at residue 127 to 133; that stretch reads GTHGKTT.

Belongs to the MurCDEF family.

Its subcellular location is the cytoplasm. The enzyme catalyses UDP-N-acetyl-alpha-D-muramate + L-alanine + ATP = UDP-N-acetyl-alpha-D-muramoyl-L-alanine + ADP + phosphate + H(+). It participates in cell wall biogenesis; peptidoglycan biosynthesis. In terms of biological role, cell wall formation. This chain is UDP-N-acetylmuramate--L-alanine ligase, found in Shewanella baltica (strain OS223).